The following is a 157-amino-acid chain: Small ribosomal subunit protein uS7 (157 aa).

This sequence belongs to the universal ribosomal protein uS7 family. Part of the 30S ribosomal subunit. Contacts proteins S9 and S11.

One of the primary rRNA binding proteins, it binds directly to 16S rRNA where it nucleates assembly of the head domain of the 30S subunit. Is located at the subunit interface close to the decoding center, probably blocks exit of the E-site tRNA. This Chloroflexus aurantiacus (strain ATCC 29366 / DSM 635 / J-10-fl) protein is Small ribosomal subunit protein uS7.